Here is a 219-residue protein sequence, read N- to C-terminus: Ras-related protein Rab-3D (219 aa).

Ala2 is modified (N-acetylalanine). Position 29–37 (29–37 (GNSSVGKTS)) interacts with GDP. GTP-binding residues include Ser31, Ser32, Val33, Gly34, Lys35, Thr36, Ser37, Pro49, and Ser53. Thr36 contributes to the Mg(2+) binding site. A Switch 1 motif is present at residues 49–58 (PAFVSTVGID). Mg(2+) contacts are provided by Thr54 and Asp77. Gly80 lines the GTP pocket. The Switch 2 motif lies at 80 to 96 (GQERYRTITTAYYRGAM). At Thr86 the chain carries Phosphothreonine; by LRRK2. Residues Asn135, Lys136, Asp138, Ala166, and Lys167 each coordinate GTP. Residues 135–138 (NKCD) and 165–167 (SAK) each bind GDP. Ser190 is modified (phosphoserine). Residues 190–199 (SLEPSSSSGS) show a composition bias toward low complexity. Positions 190-219 (SLEPSSSSGSNGKGPAVGDAPAPQPSSCSC) are disordered. 2 S-geranylgeranyl cysteine lipidation sites follow: Cys217 and Cys219. Cysteine methyl ester is present on Cys219.

Belongs to the small GTPase superfamily. Rab family. As to quaternary structure, interacts with RIMS1, RIMS2, RPH3A, RPH3AL and RAB3IP. The GTP-bound form interacts with REP15. Interacts with CHM and CHML; phosphorylation at Thr-86 disrupts these interactions. Interacts with MADD (via uDENN domain); the GTP-bound form is preferred for interaction. The cofactor is Mg(2+). Phosphorylation of Thr-86 in the switch II region by LRRK2 prevents the association of RAB regulatory proteins, including CHM and CHML. Highly expressed in granulocytes of peripheral blood. Constitutively expressed at low levels in all hematopoietic cell lines investigated.

Its subcellular location is the cell membrane. The enzyme catalyses GTP + H2O = GDP + phosphate + H(+). With respect to regulation, regulated by guanine nucleotide exchange factors (GEFs) which promote the exchange of bound GDP for free GTP. Regulated by GTPase activating proteins (GAPs) which increase the GTP hydrolysis activity. Inhibited by GDP dissociation inhibitors (GDIs) which prevent Rab-GDP dissociation. Its function is as follows. The small GTPases Rab are key regulators of intracellular membrane trafficking, from the formation of transport vesicles to their fusion with membranes. Rabs cycle between an inactive GDP-bound form and an active GTP-bound form that is able to recruit to membranes different sets of downstream effectors directly responsible for vesicle formation, movement, tethering and fusion. RAB3D may be involved in the insulin-induced exocytosis of GLUT4-containing vesicles in adipocytes. In Homo sapiens (Human), this protein is Ras-related protein Rab-3D.